A 356-amino-acid chain; its full sequence is Tyrosine recombinase XerS (356 aa).

A Core-binding (CB) domain is found at 16 to 121 (IMPWYVLEYY…ALSSLYKYLT (106 aa)). One can recognise a Tyr recombinase domain in the interval 169–354 (GFLTYIDQEY…VNDEQKNALD (186 aa)). Catalysis depends on residues R210, K234, H306, R309, and H332. Y341 functions as the O-(3'-phospho-DNA)-tyrosine intermediate in the catalytic mechanism.

It belongs to the 'phage' integrase family. XerS subfamily.

It is found in the cytoplasm. With respect to regulation, ftsK is required for recombination. Site-specific tyrosine recombinase, which acts by catalyzing the cutting and rejoining of the recombining DNA molecules. Essential to convert dimers of the bacterial chromosome into monomers to permit their segregation at cell division. The sequence is that of Tyrosine recombinase XerS from Streptococcus pneumoniae (strain Hungary19A-6).